The sequence spans 187 residues: Hypoxanthine/guanine phosphoribosyltransferase (187 aa).

It belongs to the purine/pyrimidine phosphoribosyltransferase family. Archaeal HPRT subfamily. As to quaternary structure, homodimer.

It localises to the cytoplasm. The catalysed reaction is IMP + diphosphate = hypoxanthine + 5-phospho-alpha-D-ribose 1-diphosphate. The enzyme catalyses GMP + diphosphate = guanine + 5-phospho-alpha-D-ribose 1-diphosphate. It participates in purine metabolism; IMP biosynthesis via salvage pathway; IMP from hypoxanthine: step 1/1. Functionally, catalyzes a salvage reaction resulting in the formation of IMP that is energically less costly than de novo synthesis. In Methanococcus voltae (strain ATCC BAA-1334 / A3), this protein is Hypoxanthine/guanine phosphoribosyltransferase.